The primary structure comprises 237 residues: Large ribosomal subunit protein uL1 (237 aa).

Belongs to the universal ribosomal protein uL1 family. Part of the 50S ribosomal subunit.

Binds directly to 23S rRNA. The L1 stalk is quite mobile in the ribosome, and is involved in E site tRNA release. Functionally, protein L1 is also a translational repressor protein, it controls the translation of the L11 operon by binding to its mRNA. The protein is Large ribosomal subunit protein uL1 of Thermosynechococcus vestitus (strain NIES-2133 / IAM M-273 / BP-1).